The following is a 123-amino-acid chain: Fluoride-specific ion channel FluC (123 aa).

4 consecutive transmembrane segments (helical) span residues L7 to L27, M39 to F59, F68 to F88, and L101 to A121. 2 residues coordinate Na(+): G75 and S78.

Belongs to the fluoride channel Fluc/FEX (TC 1.A.43) family.

Its subcellular location is the cell membrane. The catalysed reaction is fluoride(in) = fluoride(out). Its activity is regulated as follows. Na(+) is not transported, but it plays an essential structural role and its presence is essential for fluoride channel function. In terms of biological role, fluoride-specific ion channel. Important for reducing fluoride concentration in the cell, thus reducing its toxicity. In Thermococcus gammatolerans (strain DSM 15229 / JCM 11827 / EJ3), this protein is Fluoride-specific ion channel FluC.